The following is a 260-amino-acid chain: LOB domain-containing protein 6 (260 aa).

Residues 32–133 (SPCAACKFLR…QDLARAKYEL (102 aa)) enclose the LOB domain.

It belongs to the LOB domain-containing protein family. As to quaternary structure, interacts with RS2. As to expression, expressed in leaves, leaf primordia, immature ears, immature tassels, whole ovules, silk and husk leaves. Found on the adaxial side of organs.

The protein resides in the nucleus. Its function is as follows. Promotes the switch from proliferation to differentiation in the embryo sac. Negative regulator of cell proliferation in the adaxial side of leaves. Regulates the formation of a symmetric lamina and the establishment of venation. Interacts directly with RS2 (rough sheath 2) to repress some knox homeobox genes. This chain is LOB domain-containing protein 6 (LBD6), found in Zea mays (Maize).